Here is a 255-residue protein sequence, read N- to C-terminus: Proteasome subunit alpha type-3 (255 aa).

Ser2 is modified (N-acetylserine). Lys57, Lys206, and Lys230 each carry N6-acetyllysine. 2 positions are modified to phosphoserine: Ser243 and Ser250.

Belongs to the peptidase T1A family. As to quaternary structure, the 26S proteasome consists of a 20S proteasome core and two 19S regulatory subunits. The 20S proteasome core is a barrel-shaped complex made of 28 subunits that are arranged in four stacked rings. The two outer rings are each formed by seven alpha subunits, and the two inner rings are formed by seven beta subunits. The proteolytic activity is exerted by three beta-subunits PSMB5, PSMB6 and PSMB7. Interacts with AURKB. Interacts with CDKN1A. Interacts with MDM2 and RB1. Interacts with the C-terminus of TBXA2R isoform 2. Interacts with DNAJB2. (Microbial infection) Interacts with HIV-1 Tat protein. In terms of assembly, (Microbial infection) Interacts with hepatitis C virus (HCV) F protein. As to quaternary structure, (Microbial infection) Interacts with Epstein-Barr virus EBNA3 proteins.

Its subcellular location is the cytoplasm. It is found in the nucleus. Functionally, component of the 20S core proteasome complex involved in the proteolytic degradation of most intracellular proteins. This complex plays numerous essential roles within the cell by associating with different regulatory particles. Associated with two 19S regulatory particles, forms the 26S proteasome and thus participates in the ATP-dependent degradation of ubiquitinated proteins. The 26S proteasome plays a key role in the maintenance of protein homeostasis by removing misfolded or damaged proteins that could impair cellular functions, and by removing proteins whose functions are no longer required. Associated with the PA200 or PA28, the 20S proteasome mediates ubiquitin-independent protein degradation. This type of proteolysis is required in several pathways including spermatogenesis (20S-PA200 complex) or generation of a subset of MHC class I-presented antigenic peptides (20S-PA28 complex). Binds to the C-terminus of CDKN1A and thereby mediates its degradation. Negatively regulates the membrane trafficking of the cell-surface thromboxane A2 receptor (TBXA2R) isoform 2. This Homo sapiens (Human) protein is Proteasome subunit alpha type-3.